The sequence spans 363 residues: Dioxygenase sphC (363 aa).

3 residues coordinate Fe cation: H183, D185, and H259.

This sequence belongs to the PhyH family. As to quaternary structure, homodimer. The cofactor is Fe cation.

It carries out the reaction sphingofungin B1 + 2-oxoglutarate + O2 = sphingofungin B + succinate + CO2. It functions in the pathway secondary metabolite biosynthesis. In terms of biological role, dioxygenase; part of the gene cluster that mediates the biosynthesis of sphingofungins, bioactive molecules acting as sphingolipid inhibitors via inhibiting serine palmitoyl transferase (SPT). Within the pathway, sphC catalyzes the hydrolxylation at C-4 to convert sphingofungin B1 into sphingofungin B as well as presphingofungin into sphingofungin B2. Sphingofungin biosynthesis starts with the PKS sphB that produces an C18 polyketide precursor 3-hydroxyoctadeca-4,10-dienoyl-ACP containing one delta-6 desaturation and one delta-12 desaturation. The aminoacyl transferase sphA uses the sphB product to produce 3-keto-presphingofungin by adding an aminomalonate molecule. SphF then reduces the C-3 ketone of 3-keto-presphingofungin which leads to presphingofungin. The cytochrome P450 monooxygenase sphH converts presphingofungin into sphingofungin B1 which is further converted to sphingofungin B by the dioxygenase sphC. SphC is also able to convert presphingofungin into sphingofungin B2. The acetyltransferase sphE acetylates sphingofungin B to produce sphingofungin C, but can also convert sphingofungin B1 into sphingofungin C1 and sphingofungin B2 into sphingofungin C2. Finally, sphingofungin C can be spontaneously converted into sphingofungin D. The polypeptide is Dioxygenase sphC (Aspergillus fumigatus (strain CBS 144.89 / FGSC A1163 / CEA10) (Neosartorya fumigata)).